The primary structure comprises 856 residues: MKQYNAIKGKYPGALLLFRVGDFYETFSEDAIKASKVLGITLTKRGNGTASETALAGFPHHSLDTYLPRLVRSGLRVAICDQLEDPKSVKGIVKRGVTELVTPGVSFNDHVLDVSKNNYLAAIHFQKDSLGISFLDISTGEFLTAQGDRHYIDKLLQSFSPSEVLFCKQKKEVFIEYFGDRYNTYALEDWIFAYDFTYDLLIRHFQTTSLKGFGIEEMLEGITSAGAILHYLNETEHKEVAHITRVNRIEEERYVWLDRFTIRNLELVNAQQLEGVPLIEILDHTKTPMGARLLKKWLILPLKELTPIQERLDTVELLVKNKELTTTLVDELKPIGDLERLISKVAARRVNPREMVQLKRSLERLVPIQQLLKQQDQHVLLKLAEQINPCEYLAGRILNMLKEDAPMLTNQGRIIRDGCNAELDELRAIAYTGKDYLLQIQQREIERTGISSLKISYNKVFGYYLEVTNTHKEKVPADWIRKQTLTGAERYITEELKIYEEKILGAEDKINVIEQKMFQDLVLEAESYINPILQNARIVAQIDCLCSFAHAAVANNYCKPIVEDSALINIKAGRHPVIEKQLPLGESYIPNDIYLDDETQQVMIITGPNMAGKSALLRQTALIVLMAQAGSFVPATHATIGTVDKVFTRVGASDNLSKGESTFMVEMNETASILNNLSGRSLVLMDEIGRGTSTYDGISIAWAIVEHLHNHPNFRPKTLFATHYHELNQLTEDLKRVKNFNVSVKEAGNKVIFMRTLKPGGSEHSFGIHVAQMAGMPTSLVLRANEIMGHLEKEHVREGHEDKLKEVPKSTLQMSLFEAADPAWDSIKKILTQTDVNIMSPVEALLKLNELKQLIK.

607 to 614 (GPNMAGKS) is an ATP binding site.

It belongs to the DNA mismatch repair MutS family.

In terms of biological role, this protein is involved in the repair of mismatches in DNA. It is possible that it carries out the mismatch recognition step. This protein has a weak ATPase activity. In Cytophaga hutchinsonii (strain ATCC 33406 / DSM 1761 / CIP 103989 / NBRC 15051 / NCIMB 9469 / D465), this protein is DNA mismatch repair protein MutS.